Reading from the N-terminus, the 478-residue chain is Zinc finger and SCAN domain-containing protein 26 (478 aa).

K17 participates in a covalent cross-link: Glycyl lysine isopeptide (Lys-Gly) (interchain with G-Cter in SUMO2). The 83-residue stretch at 51 to 133 (CKQFRQLRYE…VVLEDLQLDL (83 aa)) folds into the SCAN box domain. Disordered stretches follow at residues 159–181 (GVQEQQVRHECEVTKPEKEKGEE) and 200–226 (ESSGKISEPMEAHNEGSNLERHQAKPK). Composition is skewed to basic and acidic residues over residues 164-181 (QVRHECEVTKPEKEKGEE) and 207-226 (EPMEAHNEGSNLERHQAKPK). The segment at 231–253 (YKCSEREQRFIQHLDLIEHASTH) adopts a C2H2-type 1; degenerate zinc-finger fold. 7 C2H2-type zinc fingers span residues 282 to 304 (HQCHECGKAFQRSSHLVRHQKIH), 310 to 332 (YQCNECGKVFSQNAGLLEHLRIH), 338 to 360 (YLCIHCGKNFRRSSHLNRHQRIH), 366 to 388 (CECKECGKTFSQALLLTHHQRIH), 394 to 416 (HQCNECGKAFSLTSDLIRHHRIH), 422 to 444 (FKCNICQKAFRLNSHLAQHVRIH), and 450 to 472 (YQCSECGEAFRQRSGLFQHQRYH).

Its subcellular location is the nucleus. May be involved in transcriptional regulation. In Homo sapiens (Human), this protein is Zinc finger and SCAN domain-containing protein 26 (ZSCAN26).